Here is a 497-residue protein sequence, read N- to C-terminus: Probable malate:quinone oxidoreductase (497 aa).

Belongs to the MQO family. FAD serves as cofactor.

The catalysed reaction is (S)-malate + a quinone = a quinol + oxaloacetate. The protein operates within carbohydrate metabolism; tricarboxylic acid cycle; oxaloacetate from (S)-malate (quinone route): step 1/1. The sequence is that of Probable malate:quinone oxidoreductase from Exiguobacterium sibiricum (strain DSM 17290 / CCUG 55495 / CIP 109462 / JCM 13490 / 255-15).